Reading from the N-terminus, the 468-residue chain is ERO1-like protein alpha (468 aa).

A signal peptide spans 1 to 23 (MGRGWGFLFGLLGAVWLLSSGHG). Cystine bridges form between Cys-35–Cys-48, Cys-37–Cys-46, Cys-85–Cys-391, Cys-94–Cys-99, Cys-94–Cys-131, Cys-99–Cys-104, Cys-208–Cys-241, and Cys-394–Cys-397. A phosphoserine mark is found at Ser-106 and Ser-143. Position 145 is a phosphoserine; by FAM20C (Ser-145). The FAD site is built by Arg-187, Thr-189, and Trp-200. Ser-252 and His-255 together coordinate FAD. Asn-280 carries an N-linked (GlcNAc...) asparagine glycan. FAD is bound by residues Arg-287 and Arg-300. N-linked (GlcNAc...) asparagine glycosylation occurs at Asn-384.

It belongs to the EROs family. Predominantly monomer. May function both as a monomer and a homodimer. Interacts with PDILT. Interacts with ERP44; the interaction results in retention of ERO1A in the endoplasmic reticulum. Requires FAD as cofactor. Post-translationally, N-glycosylated. In terms of processing, the Cys-94/Cys-99 and Cys-394/Cys-397 disulfide bonds constitute the redox-active center. The Cys-94/Cys-99 disulfide bond may accept electron from P4HB and funnel them to the active site disulfide Cys-394/Cys-397. The regulatory Cys-99/Cys-104 disulfide bond stabilizes the other regulatory bond Cys-94/Cys-131. Phosphorylated on Ser-145 by FAM20C in the Golgi which increases its enzymatic activity. Phosphorylation is induced by lactation. It is also induced by hypoxia and reductive stress. As to expression, widely expressed at low level. Expressed at high level in upper digestive tract. Highly expressed in esophagus. Weakly expressed in stomach and duodenum.

It localises to the endoplasmic reticulum membrane. The protein localises to the golgi apparatus lumen. It is found in the secreted. The protein resides in the cell projection. Its subcellular location is the dendrite. Its activity is regulated as follows. Enzyme activity is tightly regulated to prevent the accumulation of reactive oxygen species in the endoplasmic reticulum. Reversibly down-regulated by the formation of disulfide bonds between the active site Cys-94 and Cys-131, and between Cys-99 and Cys-104. Glutathione may be required to regulate its activity in the endoplasmic reticulum. Its function is as follows. Oxidoreductase involved in disulfide bond formation in the endoplasmic reticulum. Efficiently reoxidizes P4HB/PDI, the enzyme catalyzing protein disulfide formation, in order to allow P4HB to sustain additional rounds of disulfide formation. Following P4HB reoxidation, passes its electrons to molecular oxygen via FAD, leading to the production of reactive oxygen species (ROS) in the cell. Required for the proper folding of immunoglobulins. Plays an important role in ER stress-induced, CHOP-dependent apoptosis by activating the inositol 1,4,5-trisphosphate receptor IP3R1. Involved in the release of the unfolded cholera toxin from reduced P4HB/PDI in case of infection by V.cholerae, thereby playing a role in retrotranslocation of the toxin. In Homo sapiens (Human), this protein is ERO1-like protein alpha.